We begin with the raw amino-acid sequence, 318 residues long: tRNA pseudouridine synthase B (318 aa).

Aspartate 47 (nucleophile) is an active-site residue.

Belongs to the pseudouridine synthase TruB family. Type 1 subfamily.

The enzyme catalyses uridine(55) in tRNA = pseudouridine(55) in tRNA. In terms of biological role, responsible for synthesis of pseudouridine from uracil-55 in the psi GC loop of transfer RNAs. This Aliivibrio salmonicida (strain LFI1238) (Vibrio salmonicida (strain LFI1238)) protein is tRNA pseudouridine synthase B.